An 813-amino-acid chain; its full sequence is Leucine--tRNA ligase (813 aa).

The short motif at 42-52 (PYTSGNLHIGH) is the 'HIGH' region element. Residues 580 to 584 (KMSKS) carry the 'KMSKS' region motif. K583 is a binding site for ATP.

Belongs to the class-I aminoacyl-tRNA synthetase family.

The protein localises to the cytoplasm. It catalyses the reaction tRNA(Leu) + L-leucine + ATP = L-leucyl-tRNA(Leu) + AMP + diphosphate. This Dehalococcoides mccartyi (strain ATCC BAA-2266 / KCTC 15142 / 195) (Dehalococcoides ethenogenes (strain 195)) protein is Leucine--tRNA ligase.